The chain runs to 291 residues: N-acetylmannosamine kinase (291 aa).

Residues 5-12 (AIDIGGTK) and 132-139 (GVGGGVVC) each bind ATP. Zn(2+) is bound by residues His-156, Cys-166, Cys-168, and Cys-173.

Belongs to the ROK (NagC/XylR) family. NanK subfamily. As to quaternary structure, homodimer.

The enzyme catalyses an N-acyl-D-mannosamine + ATP = an N-acyl-D-mannosamine 6-phosphate + ADP + H(+). The protein operates within amino-sugar metabolism; N-acetylneuraminate degradation; D-fructose 6-phosphate from N-acetylneuraminate: step 2/5. Functionally, catalyzes the phosphorylation of N-acetylmannosamine (ManNAc) to ManNAc-6-P. The sequence is that of N-acetylmannosamine kinase from Salmonella dublin (strain CT_02021853).